Reading from the N-terminus, the 206-residue chain is Outer-membrane lipoprotein carrier protein (206 aa).

The first 21 residues, 1–21 (MTRLLFVLVLSVCLLPVPVKA), serve as a signal peptide directing secretion.

The protein belongs to the LolA family. As to quaternary structure, monomer.

It is found in the periplasm. In terms of biological role, participates in the translocation of lipoproteins from the inner membrane to the outer membrane. Only forms a complex with a lipoprotein if the residue after the N-terminal Cys is not an aspartate (The Asp acts as a targeting signal to indicate that the lipoprotein should stay in the inner membrane). This Nitrosomonas europaea (strain ATCC 19718 / CIP 103999 / KCTC 2705 / NBRC 14298) protein is Outer-membrane lipoprotein carrier protein.